The primary structure comprises 765 residues: 1,4-alpha-glucan branching enzyme GlgB (765 aa).

Residue Asp431 is the Nucleophile of the active site. The active-site Proton donor is Glu484.

Belongs to the glycosyl hydrolase 13 family. GlgB subfamily. In terms of assembly, monomer.

It catalyses the reaction Transfers a segment of a (1-&gt;4)-alpha-D-glucan chain to a primary hydroxy group in a similar glucan chain.. The protein operates within glycan biosynthesis; glycogen biosynthesis. Its function is as follows. Catalyzes the formation of the alpha-1,6-glucosidic linkages in glycogen by scission of a 1,4-alpha-linked oligosaccharide from growing alpha-1,4-glucan chains and the subsequent attachment of the oligosaccharide to the alpha-1,6 position. This is 1,4-alpha-glucan branching enzyme GlgB from Synechococcus sp. (strain CC9605).